The chain runs to 300 residues: Transacylase cctO (300 aa).

Residues 52–72 form a helical membrane-spanning segment; that stretch reads IVYVSLTFFVVSIGLNFILAI. Short sequence motifs (HXXHC) lie at residues 185–189 and 225–229; these read HQLGC and HVDQC. N-linked (GlcNAc...) asparagine glycosylation is present at Asn-270.

The protein belongs to the ustYa family.

The protein resides in the membrane. It participates in mycotoxin biosynthesis. Its function is as follows. Transacylase; part of the gene cluster that mediates the biosynthesis of the mycotoxin cyclochlorotine, a hepatotoxic and carcinogenic cyclic chlorinated pentapeptide. Within the pathway, cctO catalyzes the intramolecular O,N-transacylation from isocyclochlorotine to cyclochlorotine. The NRPS cctN initially catalyzes the condensation of L-serine (Ser), Pro, L-2-aminobutyrate (2Abu), Ser, and beta-Phe in this order to produce isocyclotine. After the dichlorination of Pro2 catalyzed by cctP2 to produce isocyclochlorotine, the cctO-mediated transacylation of isocyclochlorotine can furnish cyclochlorotine. The subsequent hydroxylation of cyclochlorotine by cctR yields hydroxycyclochlorotine as the final product. CctP1 probably acts as a phenylalanine aminomutase and provides the uncommon building block beta-Phe. Furthermore, 2Abu can be synthesized from threonine by one of the threonine dehydratases and transaminases localized outside of the cluster. The functions of the remaining proteins encoded by the cluster, cctM and cctT, have not been identified yet. The protein is Transacylase cctO of Talaromyces islandicus (Penicillium islandicum).